Consider the following 812-residue polypeptide: Plasminogen (812 aa).

A signal peptide spans Met-1–Gly-19. The PAN domain occupies Asp-20–Val-98. 21 disulfides stabilise this stretch: Cys-49–Cys-73, Cys-53–Cys-61, Cys-103–Cys-181, Cys-124–Cys-164, Cys-152–Cys-176, Cys-185–Cys-262, Cys-188–Cys-316, Cys-206–Cys-245, Cys-234–Cys-257, Cys-275–Cys-352, Cys-296–Cys-335, Cys-324–Cys-347, Cys-377–Cys-454, Cys-398–Cys-437, Cys-426–Cys-449, Cys-481–Cys-560, Cys-502–Cys-543, Cys-531–Cys-555, Cys-568–Cys-687, Cys-578–Cys-586, and Cys-609–Cys-625. Kringle domains are found at residues Cys-103 to Cys-181, Glu-184 to Cys-262, Cys-275 to Cys-352, Cys-377 to Cys-454, and Cys-481 to Cys-560. Residues Val-582–Arg-810 form the Peptidase S1 domain. At Ser-598 the chain carries Phosphoserine. Residues His-624 and Asp-667 each act as charge relay system in the active site. Phosphoserine is present on Ser-690. Cystine bridges form between Cys-701/Cys-768, Cys-731/Cys-747, and Cys-758/Cys-786. The Charge relay system role is filled by Ser-762.

Belongs to the peptidase S1 family. Plasminogen subfamily. Interacts (both mature PLG and the angiostatin peptide) with AMOT and CSPG4. Interacts (via the Kringle domains) with HRG; the interaction tethers PLG to the cell surface and enhances its activation. Interacts (via Kringle 4 domain) with ADA; the interaction stimulates PLG activation when in complex with DPP4. Angiostatin: Interacts with ATP5F1A; the interaction inhibits most of the angiogenic effects of angiostatin. In terms of processing, in the presence of the inhibitor, the activation involves only cleavage after Arg-581, yielding two chains held together by two disulfide bonds. In the absence of the inhibitor, the activation involves additionally the removal of the activation peptide.

The protein localises to the secreted. It carries out the reaction Preferential cleavage: Lys-|-Xaa &gt; Arg-|-Xaa, higher selectivity than trypsin. Converts fibrin into soluble products.. Converted into plasmin by plasminogen activators, both plasminogen and its activator being bound to fibrin. Cannot be activated with streptokinase. Functionally, plasmin dissolves the fibrin of blood clots and acts as a proteolytic factor in a variety of other processes including embryonic development, tissue remodeling, tumor invasion, and inflammation. In ovulation, weakens the walls of the Graafian follicle. It activates the urokinase-type plasminogen activator, collagenases and several complement zymogens, such as C1, C4 and C5. Cleavage of fibronectin and laminin leads to cell detachment and apoptosis. Also cleaves fibrin, thrombospondin and von Willebrand factor. Its role in tissue remodeling and tumor invasion may be modulated by CSPG4. Binds to cells. In terms of biological role, angiostatin is an angiogenesis inhibitor that blocks neovascularization and growth of experimental primary and metastatic tumors in vivo. This chain is Plasminogen (Plg), found in Mus musculus (Mouse).